The sequence spans 420 residues: CinA-like protein (420 aa).

This sequence belongs to the CinA family.

The chain is CinA-like protein from Chlorobium phaeobacteroides (strain BS1).